The primary structure comprises 221 residues: Ependymin-1 (221 aa).

The signal sequence occupies residues 1–21 (MQAFAVAALSIWLCLGATTLA). Residues Asn-33, Asn-73, and Asn-97 are each glycosylated (N-linked (GlcNAc...) asparagine).

This sequence belongs to the ependymin family. In terms of processing, binds calcium through the terminal sialic acids. As to expression, EPDs are synthesized in the meninx and secreted in the cerebrospinal fluid.

The protein localises to the secreted. Its function is as follows. May play a role in neural plasticity. May be involved during axon regeneration. The chain is Ependymin-1 (epd1) from Oncorhynchus mykiss (Rainbow trout).